A 54-amino-acid polypeptide reads, in one-letter code: MDKVELSDLSFNKDWSFYLLAHREFVPTATDKYACRVSHITLKEPKVVTWERDM.

The region spanning 3 to 41 (KVELSDLSFNKDWSFYLLAHREFVPTATDKYACRVSHIT) is the Ig-like C1-type domain.

This sequence belongs to the beta-2-microglobulin family. As to quaternary structure, heterodimer of an alpha chain and a beta chain. Beta-2-microglobulin is the beta-chain of major histocompatibility complex class I molecules.

It localises to the secreted. In terms of biological role, component of the class I major histocompatibility complex (MHC). Involved in the presentation of peptide antigens to the immune system. The chain is Beta-2-microglobulin (B2M) from Mesocricetus auratus (Golden hamster).